The following is a 643-amino-acid chain: tRNA 5-methylaminomethyl-2-thiouridine biosynthesis bifunctional protein MnmC (643 aa).

The interval 1–223 is tRNA (mnm(5)s(2)U34)-methyltransferase; that stretch reads MPDRLVSATL…VDDRLVGDYA (223 aa). The tract at residues 247-643 is FAD-dependent cmnm(5)s(2)U34 oxidoreductase; the sequence is IGAGLAGCAV…LRARRVGSAG (397 aa).

This sequence in the N-terminal section; belongs to the methyltransferase superfamily. tRNA (mnm(5)s(2)U34)-methyltransferase family. The protein in the C-terminal section; belongs to the DAO family. It depends on FAD as a cofactor.

Its subcellular location is the cytoplasm. It catalyses the reaction 5-aminomethyl-2-thiouridine(34) in tRNA + S-adenosyl-L-methionine = 5-methylaminomethyl-2-thiouridine(34) in tRNA + S-adenosyl-L-homocysteine + H(+). Its function is as follows. Catalyzes the last two steps in the biosynthesis of 5-methylaminomethyl-2-thiouridine (mnm(5)s(2)U) at the wobble position (U34) in tRNA. Catalyzes the FAD-dependent demodification of cmnm(5)s(2)U34 to nm(5)s(2)U34, followed by the transfer of a methyl group from S-adenosyl-L-methionine to nm(5)s(2)U34, to form mnm(5)s(2)U34. This is tRNA 5-methylaminomethyl-2-thiouridine biosynthesis bifunctional protein MnmC from Burkholderia orbicola (strain AU 1054).